We begin with the raw amino-acid sequence, 348 residues long: Protein RecA (348 aa).

66-73 (GPESSGKT) is an ATP binding site.

The protein belongs to the RecA family.

It localises to the cytoplasm. Its function is as follows. Can catalyze the hydrolysis of ATP in the presence of single-stranded DNA, the ATP-dependent uptake of single-stranded DNA by duplex DNA, and the ATP-dependent hybridization of homologous single-stranded DNAs. It interacts with LexA causing its activation and leading to its autocatalytic cleavage. The sequence is that of Protein RecA from Neisseria gonorrhoeae (strain NCCP11945).